Consider the following 210-residue polypeptide: Somatotropin (210 aa).

The first 23 residues, 1-23, serve as a signal peptide directing secretion; it reads MARALVLLSVVLVSLLVNQGTAS. Residue His-38 participates in Zn(2+) binding. An intrachain disulfide couples Cys-71 to Cys-183. Glu-192 contributes to the Zn(2+) binding site. Residues Cys-200 and Cys-208 are joined by a disulfide bond.

The protein belongs to the somatotropin/prolactin family.

The protein resides in the secreted. Its function is as follows. Growth hormone plays an important role in growth control. The sequence is that of Somatotropin (gh) from Ctenopharyngodon idella (Grass carp).